The chain runs to 241 residues: Octanoyltransferase (241 aa).

A BPL/LPL catalytic domain is found at 38-227 (AGGPDTLLLL…AVCNALDGAL (190 aa)). Substrate-binding positions include 85 to 92 (RGGKITWH), 157 to 159 (AIG), and 170 to 172 (GFA). Cys-188 serves as the catalytic Acyl-thioester intermediate.

Belongs to the LipB family.

The protein localises to the cytoplasm. The catalysed reaction is octanoyl-[ACP] + L-lysyl-[protein] = N(6)-octanoyl-L-lysyl-[protein] + holo-[ACP] + H(+). Its pathway is protein modification; protein lipoylation via endogenous pathway; protein N(6)-(lipoyl)lysine from octanoyl-[acyl-carrier-protein]: step 1/2. Catalyzes the transfer of endogenously produced octanoic acid from octanoyl-acyl-carrier-protein onto the lipoyl domains of lipoate-dependent enzymes. Lipoyl-ACP can also act as a substrate although octanoyl-ACP is likely to be the physiological substrate. In Mycobacterium marinum (strain ATCC BAA-535 / M), this protein is Octanoyltransferase.